A 278-amino-acid chain; its full sequence is Release factor glutamine methyltransferase (278 aa).

S-adenosyl-L-methionine-binding positions include 120-124 (GTGTG), aspartate 143, and asparagine 184. 184–187 (NPPY) contributes to the substrate binding site.

Belongs to the protein N5-glutamine methyltransferase family. PrmC subfamily.

It carries out the reaction L-glutaminyl-[peptide chain release factor] + S-adenosyl-L-methionine = N(5)-methyl-L-glutaminyl-[peptide chain release factor] + S-adenosyl-L-homocysteine + H(+). Functionally, methylates the class 1 translation termination release factors RF1/PrfA and RF2/PrfB on the glutamine residue of the universally conserved GGQ motif. This is Release factor glutamine methyltransferase from Deinococcus radiodurans (strain ATCC 13939 / DSM 20539 / JCM 16871 / CCUG 27074 / LMG 4051 / NBRC 15346 / NCIMB 9279 / VKM B-1422 / R1).